The primary structure comprises 651 residues: UvrABC system protein B (651 aa).

Positions 25 to 411 constitute a Helicase ATP-binding domain; it reads RGISCGAKEQ…TGGVATEQLI (387 aa). 38–45 contacts ATP; the sequence is GVTGSGKT. The Beta-hairpin motif lies at 91–114; it reads YYDYYQPEAYIPQSDVYIEKDALI. A Helicase C-terminal domain is found at 427 to 591; sequence DGQIHDVMCE…IVPRTIQKPV (165 aa). The disordered stretch occupies residues 593-615; it reads TSLSERVGSSRKKVSRDTNTDPA. The region spanning 616 to 651 is the UVR domain; the sequence is NRDIVELQKEMLLCAENLDFERAVEIRNEIKRLTAP.

Belongs to the UvrB family. Forms a heterotetramer with UvrA during the search for lesions. Interacts with UvrC in an incision complex.

Its subcellular location is the cytoplasm. Functionally, the UvrABC repair system catalyzes the recognition and processing of DNA lesions. A damage recognition complex composed of 2 UvrA and 2 UvrB subunits scans DNA for abnormalities. Upon binding of the UvrA(2)B(2) complex to a putative damaged site, the DNA wraps around one UvrB monomer. DNA wrap is dependent on ATP binding by UvrB and probably causes local melting of the DNA helix, facilitating insertion of UvrB beta-hairpin between the DNA strands. Then UvrB probes one DNA strand for the presence of a lesion. If a lesion is found the UvrA subunits dissociate and the UvrB-DNA preincision complex is formed. This complex is subsequently bound by UvrC and the second UvrB is released. If no lesion is found, the DNA wraps around the other UvrB subunit that will check the other stand for damage. This chain is UvrABC system protein B, found in Anaplasma marginale (strain St. Maries).